A 115-amino-acid chain; its full sequence is Somatostatin-1 (115 aa).

An N-terminal signal peptide occupies residues 1–24 (MLSCRFQCALVLLSLAVVFSKVSA). Residues 25-88 (APSDLRLRQL…QDEVRLELDR (64 aa)) constitute a propeptide that is removed on maturation. The segment at 65–95 (NDALDSSDLSRGADQDEVRLELDRSANSSPL) is disordered. Basic and acidic residues predominate over residues 75–88 (RGADQDEVRLELDR). The cysteines at positions 104 and 115 are disulfide-linked.

Belongs to the somatostatin family.

It is found in the secreted. In terms of biological role, somatostatin inhibits the release of somatotropin. The polypeptide is Somatostatin-1 (sst1) (Protopterus annectens (African lungfish)).